Here is a 198-residue protein sequence, read N- to C-terminus: Syndecan-4 (198 aa).

A signal peptide spans 1-23; that stretch reads MAPACLLAPLLLLLLGGFPLVPG. Residues 24–145 lie on the Extracellular side of the membrane; sequence ESIRETEVID…QGSNIFERTE (122 aa). Disordered regions lie at residues 42-76 and 94-130; these read YFSG…PRPF and AQPG…NKVS. O-linked (Xyl...) (glycosaminoglycan) serine glycans are attached at residues serine 44, serine 62, and serine 64. Acidic residues predominate over residues 48–71; sequence PDDEDAGGSDDFELSGSGDLDDTE. Over residues 102 to 118 the composition is skewed to basic and acidic residues; that stretch reads SEPKELEENEVIPKRAP. The chain crosses the membrane as a helical span at residues 146–170; that stretch reads VLAALIVGGVVGILFAVFLILLLVY. The Cytoplasmic segment spans residues 171 to 198; sequence RMKKKDEGSYDLGKKPIYKKAPTNEFYA.

It belongs to the syndecan proteoglycan family. In terms of assembly, homodimer. Interacts with CDCP1 and SDCBP. Interacts (via its cytoplasmic domain) with GIPC (via its PDZ domain). Interacts (via its cytoplasmic domain) with NUDT16L1. Interacts with DNM2; this interaction is markedly enhanced at focal ahesion site upon induction of focal adhesions and stress-fiber formation. Shedding is enhanced by a number of factors such as heparanase, thrombin or EGF. Also by stress and wound healing. PMA-mediated shedding is inhibited by TIMP3. In terms of processing, O-glycosylated; contains both chondroitin sulfate and heparan sulfate. Ser-44, Ser-62 and Ser-64 can all be modified by either chondroitin sulfate or heparan sulfate, and the protein exists in forms that contain only chondroitin sulfate, only heparan sulfate and both chondroitin sulfate and heparan sulfate. Ubiquitous. Highest levels in liver, kidney and lung.

Its subcellular location is the membrane. It is found in the secreted. Cell surface proteoglycan which regulates exosome biogenesis in concert with SDCBP and PDCD6IP. The chain is Syndecan-4 from Mus musculus (Mouse).